The primary structure comprises 395 residues: Elongation factor Tu (395 aa).

Positions 10 to 204 constitute a tr-type G domain; that stretch reads KEHANIGTIG…AVDDYIPTPE (195 aa). The tract at residues 19 to 26 is G1; the sequence is GHVDHGKT. 19–26 provides a ligand contact to GTP; that stretch reads GHVDHGKT. Residue threonine 26 coordinates Mg(2+). The segment at 60–64 is G2; that stretch reads GITIN. A G3 region spans residues 81–84; that stretch reads DCPG. Residues 81 to 85 and 136 to 139 each bind GTP; these read DCPGH and NKAD. The G4 stretch occupies residues 136–139; that stretch reads NKAD. Residues 174 to 176 are G5; it reads SAL.

This sequence belongs to the TRAFAC class translation factor GTPase superfamily. Classic translation factor GTPase family. EF-Tu/EF-1A subfamily. As to quaternary structure, monomer.

It localises to the cytoplasm. The catalysed reaction is GTP + H2O = GDP + phosphate + H(+). In terms of biological role, GTP hydrolase that promotes the GTP-dependent binding of aminoacyl-tRNA to the A-site of ribosomes during protein biosynthesis. The chain is Elongation factor Tu from Staphylococcus carnosus (strain TM300).